A 75-amino-acid chain; its full sequence is Small ribosomal subunit protein bS16c (75 aa).

This sequence belongs to the bacterial ribosomal protein bS16 family.

It is found in the plastid. It localises to the chloroplast. This Cyanidioschyzon merolae (strain NIES-3377 / 10D) (Unicellular red alga) protein is Small ribosomal subunit protein bS16c.